We begin with the raw amino-acid sequence, 379 residues long: Anthranilate O-methyltransferase 3 (379 aa).

Over residues 1 to 10 (MPMRIERDLH) the composition is skewed to basic and acidic residues. Positions 1-21 (MPMRIERDLHMATGNGETSYT) are disordered. Y20 is an S-adenosyl-L-homocysteine binding site. Anthranilate is bound at residue Q27. S-adenosyl-L-homocysteine contacts are provided by C61, N66, D100, L101, S143, and F144. Residues H164 and W165 each coordinate anthranilate. The Mg(2+) site is built by E265 and F267.

It belongs to the methyltransferase superfamily. Type-7 methyltransferase family. SABATH subfamily.

The catalysed reaction is anthranilate + S-adenosyl-L-methionine = O-methyl anthranilate + S-adenosyl-L-homocysteine. It carries out the reaction benzoate + S-adenosyl-L-methionine = methyl benzoate + S-adenosyl-L-homocysteine. The enzyme catalyses salicylate + S-adenosyl-L-methionine = methyl salicylate + S-adenosyl-L-homocysteine. Its function is as follows. Methyltransferase involved in the biosynthesis of methyl anthranilate in response to stresses. Utilizes anthranilic acid as substrate. Produces exclusively the O-methyl ester. Can also use benzoic acid as substrate. Low activity with salicylic acid. In Zea mays (Maize), this protein is Anthranilate O-methyltransferase 3 (AAMT3).